A 1014-amino-acid polypeptide reads, in one-letter code: MSRRTRSRSPPRRSYNRERRDYRKYDDSEDQKGARYNRYVDDVSSRRDRHDSFRSHESNKIRRDNSWKHDKYSYEKRYQERDREYARSKNIPDQYIGRSPRPTSHRHAEEKEVDNKTKSDETNPVLQGSATEIKPQPRRSRFDRTERVGASLSVSEIQSENPRVDVIPKDKAVENNHQRNAEKPVASDKITDAKLLARLERVRAWKESKAKQEASKKEEHKLNTKPQVTAKDQNAMPSTGISGFEINRQKDTSDMKRNNRVHMDDEDGPRRMNLEDYQELWDQEDRGMLGNEQAASMEEDEVDPLDAYMASLVGTTDTIRPGLLNTEVIDPNANDDERMVISETLEEEENLLALAAKRSKKKDVITVDHSKINYEDFKKDFYVEPEELKNLSPAEVDELRASLDGIKIRGIDCPKPVTSWSQCGLSAQTISVINSLGYEKPTSIQAQAIPAITSGRDVIGVAKTGSGKTIAFLLPMFRHIKDQRPLKTGEGPIAIIMTPTRELAVQIFRECKPFLKLLNIRACCAYGGAPIKDQIADLKRGAEIVVCTPGRMIDVLSANAGRVTNLHRCTYLVLDEADRMFDLGFEPQVMRIINNIRPDRQTVLFSATFPRAMEALARKVLKKPVEITVGGRSVVASEVEQIVEVRPEESKFSRLLELLGELYNNQLDVRTLVFVDRQESADALLSDLMKRGYTSNSIHGGKDQHDRDSTISDYKAGVFDVLIATSVVARGLDVKSLQLVVNYDCPNHMEDYVHRVGRTGRAGHTGVAVTFITPEQEKYAVDIAKALKMSKQPVPKELQTLASQFLEKVKAGKEKAAGGGFGGKGLSRLDETRNAERKMQRKAYGEDEEDVETEAEAKSPLEKITPEKSTGDPTLDRVRAAVGGIAARAFANQTAQSNKLTQPISIIKTDGDEYKAKMEINDYPQQARWAVTNNTNIVHVTELTGTSITTKGNFYLPGKNPEPGEEKLYLWIEGPSELVVNRAITELRRLLLEGINHSLEGGNKPSASGRYTVV.

The span at 1–11 shows a compositional bias: basic residues; that stretch reads MSRRTRSRSPP. The tract at residues 1-149 is disordered; it reads MSRRTRSRSP…SRFDRTERVG (149 aa). Basic and acidic residues-rich tracts occupy residues 15–87 and 106–121; these read YNRE…EYAR and RHAEEKEVDNKTKSDE. A Q motif motif is present at residues 418–446; it reads TSWSQCGLSAQTISVINSLGYEKPTSIQA. Residues 449–627 enclose the Helicase ATP-binding domain; that stretch reads IPAITSGRDV…RKVLKKPVEI (179 aa). Position 462-469 (462-469) interacts with ATP; sequence AKTGSGKT. Residues 575-578 carry the DEAD box motif; sequence DEAD. The region spanning 638–802 is the Helicase C-terminal domain; sequence EVEQIVEVRP…PVPKELQTLA (165 aa). The interval 815 to 875 is disordered; sequence KAAGGGFGGK…PEKSTGDPTL (61 aa). Basic and acidic residues-rich tracts occupy residues 827 to 838 and 855 to 875; these read SRLDETRNAERK and AEAKSPLEKITPEKSTGDPTL.

Belongs to the DEAD box helicase family. DDX46/PRP5 subfamily.

The protein localises to the nucleus. The enzyme catalyses ATP + H2O = ADP + phosphate + H(+). Its function is as follows. ATP-dependent RNA helicase involved in pre-spliceosome/complex A assembly and mRNA splicing. Bridges U1 and U2 snRNPs during pre-spliceosome assembly and enables stable U2 snRNP association with intron RNA. Through its helicase activity probably catalyzes an ATP-dependent conformational change of U2 snRNP. This is Pre-mRNA-processing ATP-dependent RNA helicase prp11 (prp11) from Schizosaccharomyces pombe (strain 972 / ATCC 24843) (Fission yeast).